Reading from the N-terminus, the 188-residue chain is Large ribosomal subunit protein bL35m (188 aa).

This sequence belongs to the bacterial ribosomal protein bL35 family.

It is found in the mitochondrion. The protein is Large ribosomal subunit protein bL35m (MRPL35) of Bos taurus (Bovine).